A 474-amino-acid chain; its full sequence is Iroquois-class homeodomain protein irx-5 (474 aa).

A DNA-binding region (homeobox; TALE-type) is located at residues 109 to 171; the sequence is DPAYRKNASR…NARRRLKKEN (63 aa). 3 disordered regions span residues 174–222, 252–294, and 453–474; these read TWTP…SPDG, ERNG…IQQL, and SQSQ…MSSI. The segment covering 182 to 199 has biased composition (acidic residues); the sequence is EDEDDDENIDLEKNEEDD. A compositionally biased stretch (pro residues) spans 263 to 273; the sequence is PPTPPLCPPDQ.

The protein belongs to the TALE/IRO homeobox family. In terms of tissue distribution, early in gastrulation, expressed in cells beneath the blastopore lip. Subsequently expressed in the neural plate in overlapping patterns with other irx members, which all share an anterior border of expression. At the time of neural tube closure (stage 19) in regions of the midbrain, hindbrain, neural tube and optic vesicle, where expression continues during tailbud stages. In stage 34, expressed throughout the eye retina. Does not appear to be expressed in the developing heart or pronephros.

It localises to the nucleus. Acts partially redundantly with other irx members in neural patterning. Required for formation of the posterior forebrain, midbrain, hindbrain, and to a lesser extent, spinal cord. Patterns the neuroectoderm in both the anterior/posterior and dorsal/ventral axes. Does not appear to play a role in pronephros kidney development. Involved in craniofacial and gonadal development. Modulates the migration of progenitor cell populations in branchial arches and gonads by repressing CXCL12. The protein is Iroquois-class homeodomain protein irx-5 (irx5) of Xenopus laevis (African clawed frog).